The primary structure comprises 103 residues: RNA-binding protein YlxQ (103 aa).

The protein belongs to the eukaryotic ribosomal protein eL8 family.

Functionally, RNA-binding protein that recognizes the K-turn motif present in ribosomal RNA, but also in box C/D and box C'/D' sRNAs. This chain is RNA-binding protein YlxQ, found in Enterococcus faecium (Streptococcus faecium).